Consider the following 232-residue polypeptide: Ion-translocating oxidoreductase complex subunit E (232 aa).

Transmembrane regions (helical) follow at residues 18 to 38 (GLVQ…ITNA), 39 to 59 (LGLG…VSLV), 69 to 89 (IPVF…LINA), 93 to 113 (GLYL…IIIG), 127 to 147 (AAFD…VLGA), and 182 to 202 (PFLL…LIAL).

This sequence belongs to the NqrDE/RnfAE family. The complex is composed of six subunits: RnfA, RnfB, RnfC, RnfD, RnfE and RnfG.

The protein resides in the cell inner membrane. In terms of biological role, part of a membrane-bound complex that couples electron transfer with translocation of ions across the membrane. This Shewanella baltica (strain OS185) protein is Ion-translocating oxidoreductase complex subunit E.